A 376-amino-acid chain; its full sequence is Histidinol dehydrogenase (376 aa).

Residues Tyr-100 and Asn-182 each coordinate NAD(+). Ser-205, Gln-227, and His-230 together coordinate substrate. Zn(2+)-binding residues include Gln-227 and His-230. Active-site proton acceptor residues include Glu-275 and His-276. Residues His-276, Asp-309, Glu-363, and His-368 each coordinate substrate. Zn(2+) is bound at residue Asp-309. His-368 provides a ligand contact to Zn(2+).

The protein belongs to the histidinol dehydrogenase family. Requires Zn(2+) as cofactor.

The catalysed reaction is L-histidinol + 2 NAD(+) + H2O = L-histidine + 2 NADH + 3 H(+). The protein operates within amino-acid biosynthesis; L-histidine biosynthesis; L-histidine from 5-phospho-alpha-D-ribose 1-diphosphate: step 9/9. In terms of biological role, catalyzes the sequential NAD-dependent oxidations of L-histidinol to L-histidinaldehyde and then to L-histidine. This chain is Histidinol dehydrogenase, found in Thermococcus kodakarensis (strain ATCC BAA-918 / JCM 12380 / KOD1) (Pyrococcus kodakaraensis (strain KOD1)).